A 238-amino-acid polypeptide reads, in one-letter code: tRNA (guanine-N(1)-)-methyltransferase (238 aa).

Residues Gly110 and 129-134 (LGDFIL) contribute to the S-adenosyl-L-methionine site.

The protein belongs to the RNA methyltransferase TrmD family. In terms of assembly, homodimer.

The protein resides in the cytoplasm. The enzyme catalyses guanosine(37) in tRNA + S-adenosyl-L-methionine = N(1)-methylguanosine(37) in tRNA + S-adenosyl-L-homocysteine + H(+). In terms of biological role, specifically methylates guanosine-37 in various tRNAs. This chain is tRNA (guanine-N(1)-)-methyltransferase, found in Clostridium botulinum (strain Eklund 17B / Type B).